Here is a 938-residue protein sequence, read N- to C-terminus: Isoleucine--tRNA ligase (938 aa).

Positions 58–68 (PYANGSIHIGH) match the 'HIGH' region motif. Lysine 183 carries the N6-acetyllysine modification. Glutamate 561 is a binding site for L-isoleucyl-5'-AMP. The 'KMSKS' region motif lies at 602 to 606 (KMSKS). Lysine 605 provides a ligand contact to ATP. Residues cysteine 901, cysteine 904, cysteine 921, and cysteine 924 each coordinate Zn(2+).

This sequence belongs to the class-I aminoacyl-tRNA synthetase family. IleS type 1 subfamily. Monomer. It depends on Zn(2+) as a cofactor.

The protein resides in the cytoplasm. It catalyses the reaction tRNA(Ile) + L-isoleucine + ATP = L-isoleucyl-tRNA(Ile) + AMP + diphosphate. In terms of biological role, catalyzes the attachment of isoleucine to tRNA(Ile). As IleRS can inadvertently accommodate and process structurally similar amino acids such as valine, to avoid such errors it has two additional distinct tRNA(Ile)-dependent editing activities. One activity is designated as 'pretransfer' editing and involves the hydrolysis of activated Val-AMP. The other activity is designated 'posttransfer' editing and involves deacylation of mischarged Val-tRNA(Ile). The protein is Isoleucine--tRNA ligase of Shigella boydii serotype 4 (strain Sb227).